A 60-amino-acid chain; its full sequence is MAVPKKKTSKSRRDMRRAHHALVNVTGAECPNCGEVKLPHHVCGSCGHYDGREVVAQAEA.

It belongs to the bacterial ribosomal protein bL32 family.

This Paramagnetospirillum magneticum (strain ATCC 700264 / AMB-1) (Magnetospirillum magneticum) protein is Large ribosomal subunit protein bL32.